A 545-amino-acid chain; its full sequence is CWF19-like protein 1 homolog (545 aa).

Positions 306–329 (YFYDMDGGRRKRQGGDNNKRDKRP) are disordered.

It belongs to the CWF19 family.

This chain is CWF19-like protein 1 homolog, found in Drosophila melanogaster (Fruit fly).